The chain runs to 173 residues: Photosystem I assembly protein Ycf3 (173 aa).

3 TPR repeats span residues 35-68 (AYIY…EENK), 72-105 (GETL…NPKQ), and 120-153 (GRNA…YPGG).

This sequence belongs to the Ycf3 family.

The protein localises to the cellular thylakoid membrane. Its function is as follows. Essential for the assembly of the photosystem I (PSI) complex. May act as a chaperone-like factor to guide the assembly of the PSI subunits. This Prochlorococcus marinus (strain MIT 9312) protein is Photosystem I assembly protein Ycf3.